A 185-amino-acid chain; its full sequence is Elongation factor P (185 aa).

The protein belongs to the elongation factor P family.

It is found in the cytoplasm. The protein operates within protein biosynthesis; polypeptide chain elongation. In terms of biological role, involved in peptide bond synthesis. Stimulates efficient translation and peptide-bond synthesis on native or reconstituted 70S ribosomes in vitro. Probably functions indirectly by altering the affinity of the ribosome for aminoacyl-tRNA, thus increasing their reactivity as acceptors for peptidyl transferase. This chain is Elongation factor P, found in Deinococcus deserti (strain DSM 17065 / CIP 109153 / LMG 22923 / VCD115).